The sequence spans 372 residues: MFSFQINSNCSSTRARVGCLNTPHGDVHTPQFMPVGTLGTVKGVSPDQLLKTGSEMILANTYHLHLQPGEEIVHEAGGLHKFMGWDQPILTDSGGYQVFSLGKLNKIDDEGVEFKNPRDGSHLKLTPEIAIQIQMSLGSDIAMAFDQCPPYPATFNDVEEACLRTHNWLERSIAIHNKSDQALFGIIQGGCYPELREESARVVSSFNLPGIAIGGVSVGEPSDQINHIVRKVAPLLPEGIPRYLMGIGSLRELAIAVSNGIDLFDCVMPTRLGRHGTALVSGERWNLRNATFRNDHKPLDETCLCETCTNHTRAYLHHLIRSEELLGLTLLSVHNISHLIRFTRAMGRAIEDGCFSEDFAPWQKDSIAHYTW.

The active-site Proton acceptor is the Asp92. Substrate is bound by residues 92–96 (DSGGY), Asp146, Gln188, and Gly215. The RNA binding stretch occupies residues 246 to 252 (GIGSLRE). Asp265 serves as the catalytic Nucleophile. An RNA binding; important for wobble base 34 recognition region spans residues 270 to 274 (TRLGR). 4 residues coordinate Zn(2+): Cys303, Cys305, Cys308, and His334.

This sequence belongs to the queuine tRNA-ribosyltransferase family. In terms of assembly, homodimer. Within each dimer, one monomer is responsible for RNA recognition and catalysis, while the other monomer binds to the replacement base PreQ1. Zn(2+) is required as a cofactor.

The enzyme catalyses 7-aminomethyl-7-carbaguanine + guanosine(34) in tRNA = 7-aminomethyl-7-carbaguanosine(34) in tRNA + guanine. It participates in tRNA modification; tRNA-queuosine biosynthesis. Functionally, catalyzes the base-exchange of a guanine (G) residue with the queuine precursor 7-aminomethyl-7-deazaguanine (PreQ1) at position 34 (anticodon wobble position) in tRNAs with GU(N) anticodons (tRNA-Asp, -Asn, -His and -Tyr). Catalysis occurs through a double-displacement mechanism. The nucleophile active site attacks the C1' of nucleotide 34 to detach the guanine base from the RNA, forming a covalent enzyme-RNA intermediate. The proton acceptor active site deprotonates the incoming PreQ1, allowing a nucleophilic attack on the C1' of the ribose to form the product. After dissociation, two additional enzymatic reactions on the tRNA convert PreQ1 to queuine (Q), resulting in the hypermodified nucleoside queuosine (7-(((4,5-cis-dihydroxy-2-cyclopenten-1-yl)amino)methyl)-7-deazaguanosine). The protein is Queuine tRNA-ribosyltransferase of Prochlorococcus marinus (strain MIT 9211).